The following is a 490-amino-acid chain: Betaine aldehyde dehydrogenase (490 aa).

D93 contacts K(+). 150 to 152 (GAW) lines the NAD(+) pocket. The active-site Charge relay system is K162. 176–179 (KPSE) lines the NAD(+) pocket. V180 serves as a coordination point for K(+). An NAD(+)-binding site is contributed by 230-233 (GIAS). L246 contributes to the K(+) binding site. E252 (proton acceptor) is an active-site residue. Positions 254, 286, and 387 each coordinate NAD(+). C286 acts as the Nucleophile in catalysis. The residue at position 286 (C286) is a Cysteine sulfenic acid (-SOH). Residues K457 and G460 each contribute to the K(+) site. E464 acts as the Charge relay system in catalysis.

This sequence belongs to the aldehyde dehydrogenase family. As to quaternary structure, dimer of dimers. K(+) is required as a cofactor.

It catalyses the reaction betaine aldehyde + NAD(+) + H2O = glycine betaine + NADH + 2 H(+). Its pathway is amine and polyamine biosynthesis; betaine biosynthesis via choline pathway; betaine from betaine aldehyde: step 1/1. Involved in the biosynthesis of the osmoprotectant glycine betaine. Catalyzes the irreversible oxidation of betaine aldehyde to the corresponding acid. The sequence is that of Betaine aldehyde dehydrogenase from Yersinia pestis.